A 396-amino-acid polypeptide reads, in one-letter code: Ornithine aminotransferase (396 aa).

The residue at position 255 (Lys-255) is an N6-(pyridoxal phosphate)lysine.

This sequence belongs to the class-III pyridoxal-phosphate-dependent aminotransferase family. OAT subfamily. Pyridoxal 5'-phosphate is required as a cofactor.

The protein resides in the cytoplasm. It carries out the reaction a 2-oxocarboxylate + L-ornithine = L-glutamate 5-semialdehyde + an L-alpha-amino acid. It participates in amino-acid biosynthesis; L-proline biosynthesis; L-glutamate 5-semialdehyde from L-ornithine: step 1/1. Functionally, catalyzes the interconversion of ornithine to glutamate semialdehyde. This Bacillus cereus (strain 03BB102) protein is Ornithine aminotransferase.